A 165-amino-acid polypeptide reads, in one-letter code: Large ribosomal subunit protein uL11 (165 aa).

The protein belongs to the universal ribosomal protein uL11 family. As to quaternary structure, part of the ribosomal stalk of the 50S ribosomal subunit. Interacts with L10 and the large rRNA to form the base of the stalk. L10 forms an elongated spine to which L12 dimers bind in a sequential fashion forming a multimeric L10(L12)X complex.

Functionally, forms part of the ribosomal stalk which helps the ribosome interact with GTP-bound translation factors. This chain is Large ribosomal subunit protein uL11, found in Thermococcus kodakarensis (strain ATCC BAA-918 / JCM 12380 / KOD1) (Pyrococcus kodakaraensis (strain KOD1)).